The chain runs to 429 residues: 3-phosphoshikimate 1-carboxyvinyltransferase (429 aa).

3-phosphoshikimate-binding residues include K21, S22, and R26. Residue K21 coordinates phosphoenolpyruvate. The phosphoenolpyruvate site is built by G94 and R122. 3-phosphoshikimate contacts are provided by S167, Q169, D315, and K342. Position 169 (Q169) interacts with phosphoenolpyruvate. The Proton acceptor role is filled by D315. R346 and R388 together coordinate phosphoenolpyruvate.

This sequence belongs to the EPSP synthase family. Monomer.

The protein localises to the cytoplasm. It carries out the reaction 3-phosphoshikimate + phosphoenolpyruvate = 5-O-(1-carboxyvinyl)-3-phosphoshikimate + phosphate. It participates in metabolic intermediate biosynthesis; chorismate biosynthesis; chorismate from D-erythrose 4-phosphate and phosphoenolpyruvate: step 6/7. In terms of biological role, catalyzes the transfer of the enolpyruvyl moiety of phosphoenolpyruvate (PEP) to the 5-hydroxyl of shikimate-3-phosphate (S3P) to produce enolpyruvyl shikimate-3-phosphate and inorganic phosphate. In Desulforudis audaxviator (strain MP104C), this protein is 3-phosphoshikimate 1-carboxyvinyltransferase.